A 743-amino-acid polypeptide reads, in one-letter code: ABC-type transporter claG (743 aa).

N-linked (GlcNAc...) asparagine glycosylation is found at Asn-4 and Asn-30. The helical transmembrane segment at Ser-124–Ile-144 threads the bilayer. The N-linked (GlcNAc...) asparagine glycan is linked to Asn-159. An ABC transporter domain is found at Val-200–Leu-439. Gly-234 to Ser-241 provides a ligand contact to ATP. Helical transmembrane passes span Tyr-507–Ser-527, Gly-560–Gly-580, Ile-611–Ser-631, Leu-636–Ile-656, and Asn-661–Pro-681.

Belongs to the ABC transporter superfamily. ABCG family.

The protein localises to the membrane. In terms of biological role, ABC-type transporter; part of the cla gene cluster that produces clavatol and ortho-quinone methide. The clavatol biosynthesis cluster cla and the terrestric acid cluster tra are both involved in the production of peniphenones and penilactones. In Penicillium crustosum (Blue mold fungus), this protein is ABC-type transporter claG.